The primary structure comprises 152 residues: Small ribosomal subunit protein uS11 (152 aa).

This sequence belongs to the universal ribosomal protein uS11 family. As to quaternary structure, component of the small ribosomal subunit. Part of the small subunit (SSU) processome, composed of more than 70 proteins and the RNA chaperone small nucleolar RNA (snoRNA) U3.

It localises to the cytoplasm. It is found in the nucleus. The protein localises to the nucleolus. In terms of biological role, component of the small ribosomal subunit. The ribosome is a large ribonucleoprotein complex responsible for the synthesis of proteins in the cell. Part of the small subunit (SSU) processome, first precursor of the small eukaryotic ribosomal subunit. During the assembly of the SSU processome in the nucleolus, many ribosome biogenesis factors, an RNA chaperone and ribosomal proteins associate with the nascent pre-rRNA and work in concert to generate RNA folding, modifications, rearrangements and cleavage as well as targeted degradation of pre-ribosomal RNA by the RNA exosome. This chain is Small ribosomal subunit protein uS11 (rps-14), found in Caenorhabditis elegans.